Here is a 270-residue protein sequence, read N- to C-terminus: 4-hydroxy-tetrahydrodipicolinate reductase (270 aa).

NAD(+)-binding positions include 11–16 and Glu37; that span reads GASGRM. Arg38 provides a ligand contact to NADP(+). Residues 101-103 and 125-128 contribute to the NAD(+) site; these read GTT and SPNM. His158 (proton donor/acceptor) is an active-site residue. His159 is a (S)-2,3,4,5-tetrahydrodipicolinate binding site. Lys162 functions as the Proton donor in the catalytic mechanism. Residue 168–169 participates in (S)-2,3,4,5-tetrahydrodipicolinate binding; that stretch reads GT.

This sequence belongs to the DapB family.

It localises to the cytoplasm. It catalyses the reaction (S)-2,3,4,5-tetrahydrodipicolinate + NAD(+) + H2O = (2S,4S)-4-hydroxy-2,3,4,5-tetrahydrodipicolinate + NADH + H(+). It carries out the reaction (S)-2,3,4,5-tetrahydrodipicolinate + NADP(+) + H2O = (2S,4S)-4-hydroxy-2,3,4,5-tetrahydrodipicolinate + NADPH + H(+). It functions in the pathway amino-acid biosynthesis; L-lysine biosynthesis via DAP pathway; (S)-tetrahydrodipicolinate from L-aspartate: step 4/4. Its function is as follows. Catalyzes the conversion of 4-hydroxy-tetrahydrodipicolinate (HTPA) to tetrahydrodipicolinate. This chain is 4-hydroxy-tetrahydrodipicolinate reductase, found in Shewanella denitrificans (strain OS217 / ATCC BAA-1090 / DSM 15013).